A 331-amino-acid polypeptide reads, in one-letter code: Sucrose operon repressor (331 aa).

One can recognise an HTH lacI-type domain in the interval 1–56 (MASLKDVARLAGVSMMTVSRVMHNAESVRPATRDRVLQAIQTLNYVPDLSARKMRA). Positions 4–23 (LKDVARLAGVSMMTVSRVMH) form a DNA-binding region, H-T-H motif.

Repressor for the csc operon. Binds D-fructose as an inducer. This chain is Sucrose operon repressor (cscR), found in Escherichia coli.